The primary structure comprises 70 residues: Conotoxin Cal6.11 (70 aa).

Residues 1 to 22 (MKLTCVLIIAVLILTACQFIAA) form the signal peptide. Residues 23–43 (DNTEYRKWRRSGTSTGMRLGS) constitute a propeptide that is removed on maturation. Disulfide bonds link Cys-46–Cys-57, Cys-50–Cys-62, and Cys-56–Cys-69. Pro-48 and Pro-58 each carry 4-hydroxyproline. 4-carboxyglutamate occurs at positions 60 and 67.

It belongs to the conotoxin O1 superfamily. Expressed by the venom duct.

The protein resides in the secreted. In terms of biological role, probable neurotoxin with unknown target. Possibly targets ion channels. This Californiconus californicus (California cone) protein is Conotoxin Cal6.11.